Consider the following 60-residue polypeptide: Large ribosomal subunit protein bL32 (60 aa).

The protein belongs to the bacterial ribosomal protein bL32 family.

The polypeptide is Large ribosomal subunit protein bL32 (Thermosipho melanesiensis (strain DSM 12029 / CIP 104789 / BI429)).